Consider the following 489-residue polypeptide: Probable serine protease EDA2 (489 aa).

The first 25 residues, 1–25 (MSLEFGFILINIFTAIVSFSTLSHA), serve as a signal peptide directing secretion. N-linked (GlcNAc...) asparagine glycans are attached at residues N35, N51, and N162. The active-site Charge relay system is the S178. N-linked (GlcNAc...) asparagine glycans are attached at residues N253, N293, N365, and N406. D410 functions as the Charge relay system in the catalytic mechanism. N419 carries N-linked (GlcNAc...) asparagine glycosylation. H436 (charge relay system) is an active-site residue. An N-linked (GlcNAc...) asparagine glycan is attached at N456.

Belongs to the peptidase S28 family.

The protein localises to the secreted. May be involved in a proteolytic pathway controlling the nuclear division phase of megagametogenesis. The protein is Probable serine protease EDA2 (EDA2) of Arabidopsis thaliana (Mouse-ear cress).